Here is a 130-residue protein sequence, read N- to C-terminus: Astrocytic phosphoprotein PEA-15 (130 aa).

Residues Glu-3–Asp-81 form the DED domain. Ser-61, Ser-90, Ser-104, and Ser-116 each carry phosphoserine. The tract at residues Lys-98–Lys-107 is microtubule-binding. A microtubule-binding region spans residues Lys-122 to Lys-129.

Binds RPS6KA3, MAPK3 and MAPK1. Transient interaction with PLD1 and PLD2. Interacts with CASP8 and FADD. In terms of processing, phosphorylated by protein kinase C and calcium-calmodulin-dependent protein kinase. These phosphorylation events are modulated by neurotransmitters or hormones. Ubiquitously expressed. Most abundant in tissues such as heart, brain, muscle and adipose tissue which utilize glucose as an energy source. Lower expression in glucose-producing tissues. Higher levels of expression are found in tissues from individuals with type 2 diabetes than in controls.

Its subcellular location is the cytoplasm. In terms of biological role, blocks Ras-mediated inhibition of integrin activation and modulates the ERK MAP kinase cascade. Inhibits RPS6KA3 activities by retaining it in the cytoplasm. Inhibits both TNFRSF6- and TNFRSF1A-mediated CASP8 activity and apoptosis. Regulates glucose transport by controlling both the content of SLC2A1 glucose transporters on the plasma membrane and the insulin-dependent trafficking of SLC2A4 from the cell interior to the surface. This chain is Astrocytic phosphoprotein PEA-15 (PEA15), found in Homo sapiens (Human).